The primary structure comprises 357 residues: Actin, macronuclear (357 aa).

Belongs to the actin family. In terms of processing, met-1 may be removed after translation.

Its subcellular location is the cytoplasm. The protein localises to the cytoskeleton. The catalysed reaction is ATP + H2O = ADP + phosphate + H(+). In terms of biological role, actins are highly conserved proteins that are involved in various types of cell motility and are ubiquitously expressed in all eukaryotic cells. The polypeptide is Actin, macronuclear (Oxytricha fallax).